Consider the following 262-residue polypeptide: Acyl-[acyl-carrier-protein]--UDP-N-acetylglucosamine O-acyltransferase (262 aa).

It belongs to the transferase hexapeptide repeat family. LpxA subfamily. In terms of assembly, homotrimer.

It is found in the cytoplasm. The catalysed reaction is a (3R)-hydroxyacyl-[ACP] + UDP-N-acetyl-alpha-D-glucosamine = a UDP-3-O-[(3R)-3-hydroxyacyl]-N-acetyl-alpha-D-glucosamine + holo-[ACP]. It participates in glycolipid biosynthesis; lipid IV(A) biosynthesis; lipid IV(A) from (3R)-3-hydroxytetradecanoyl-[acyl-carrier-protein] and UDP-N-acetyl-alpha-D-glucosamine: step 1/6. In terms of biological role, involved in the biosynthesis of lipid A, a phosphorylated glycolipid that anchors the lipopolysaccharide to the outer membrane of the cell. This Aliivibrio salmonicida (strain LFI1238) (Vibrio salmonicida (strain LFI1238)) protein is Acyl-[acyl-carrier-protein]--UDP-N-acetylglucosamine O-acyltransferase.